A 351-amino-acid chain; its full sequence is Putative glycosyltransferase 45 (351 aa).

It belongs to the glycosyltransferase group 1 family.

This Sulfolobus islandicus filamentous virus (isolate Iceland/Hveragerdi) (SIFV) protein is Putative glycosyltransferase 45 (SIFV0045).